Consider the following 578-residue polypeptide: Dapdiamide synthesis protein DdaD (578 aa).

In terms of domain architecture, Carrier spans 498-573; it reads ESISATEHQI…KMAAWLDASS (76 aa). Position 533 is an O-(pantetheine 4'-phosphoryl)serine (serine 533).

It belongs to the ATP-dependent AMP-binding enzyme family. The cofactor is pantetheine 4'-phosphate.

The protein operates within antibiotic biosynthesis. Involved in dapdiamide antibiotics biosynthesis. Activates and sequesters N-beta-fumaramoyl-DAP as a covalently tethered thioester for subsequent oxidative modification of the fumaramoyl group. The polypeptide is Dapdiamide synthesis protein DdaD (Enterobacter agglomerans (Erwinia herbicola)).